The primary structure comprises 273 residues: Tryptase (273 aa).

An N-terminal signal peptide occupies residues 1–18 (MLKLLLLTLPLLSSLVHA). A propeptide spans 19 to 28 (APSLAMPREG) (activation peptide). The Peptidase S1 domain occupies 29 to 270 (IVGGQEASGN…YLDWIYRYVP (242 aa)). An N-linked (GlcNAc...) asparagine glycan is attached at Asn49. Cys57 and Cys73 are joined by a disulfide. Active-site charge relay system residues include His72 and Asp119. 3 disulfide bridges follow: Cys153–Cys228, Cys186–Cys209, and Cys218–Cys246. The active-site Charge relay system is Ser222.

It belongs to the peptidase S1 family. Tryptase subfamily. As to quaternary structure, homotetramer. Post-translationally, glycosylated. As to expression, mast cells.

The protein resides in the secreted. It catalyses the reaction Preferential cleavage: Arg-|-Xaa, Lys-|-Xaa, but with more restricted specificity than trypsin.. Its function is as follows. Tryptase is the major neutral protease present in mast cells and is secreted upon the coupled activation-degranulation response of this cell type. May play a role in innate immunity. In Rattus norvegicus (Rat), this protein is Tryptase (Tpsab1).